Here is an 889-residue protein sequence, read N- to C-terminus: Voltage-gated potassium channel KCNC3 (889 aa).

The tract at residues 1-80 (MLSSVCVWSF…CSGLPAVAMG (80 aa)) is important for normal N-type inactivation. Residues 1 to 291 (MLSSVCVWSF…EDPYSSRAAR (291 aa)) are Cytoplasmic-facing. Residues 10 to 66 (FSGRQGTRKQHSQPAPTPQPPESSPPPLLPPPQQQCAQPGTAASPAGAPLSCGPGGR) are disordered. Pro residues predominate over residues 24 to 42 (APTPQPPESSPPPLLPPPQ). Zn(2+) is bound by residues H159, C165, C186, and C187. Residues 202–231 (DSFEAPDSSGNANANAGGAHDAGLDDEAGA) form a disordered region. Residues 211–222 (GNANANAGGAHD) show a composition bias toward low complexity. A helical transmembrane segment spans residues 292–310 (YVAFASLFFILISITTFCL). N-linked (GlcNAc...) asparagine glycosylation is present at N321. The chain crosses the membrane as a helical span at residues 352–371 (VEGVCVVWFTFEFLMRVTFC). The Cytoplasmic portion of the chain corresponds to 372–380 (PDKVEFLKS). The helical transmembrane segment at 381–399 (SLNIIDCVAILPFYLEVGL) threads the bilayer. The chain crosses the membrane as a helical; Voltage-sensor span at residues 413–435 (FLRVVRFVRILRIFKLTRHFVGL). Residues 436–448 (RVLGHTLRASTNE) lie on the Cytoplasmic side of the membrane. Residues 449 to 470 (FLLLIIFLALGVLIFATMIYYA) form a helical membrane-spanning segment. 4 residues coordinate K(+): T504, L505, G506, and Y507. A Selectivity filter motif is present at residues 504–509 (TLGYGD). A helical membrane pass occupies residues 519–540 (LVGALCALAGVLTIAMPVPVIV). Over 541 to 889 (NNFGMYYSLA…FPSRHSSPAV (349 aa)) the chain is Cytoplasmic. 3 disordered regions span residues 557-627 (PKKK…LLRG), 691-834 (IDQP…PQSL), and 852-889 (TLGF…SPAV). R626 is modified (omega-N-methylarginine). A phosphoserine mark is found at S697 and S702. Residues 748-764 (SQAPPASCPTSTPTQQP) are compositionally biased toward low complexity. T759 is modified (phosphothreonine). Positions 794–808 (HRSHQPPGKHQRGGR) are enriched in basic residues.

Belongs to the potassium channel family. C (Shaw) (TC 1.A.1.2) subfamily. Kv3.3/KCNC3 sub-subfamily. Homotetramer. Heterotetramer with KCNC1. Interacts (via C-terminus) with HAX1; this interaction modulates channel gating. Identified in a complex with ACTR3, a subunit of the Arp2/3 complex; this interaction is indirect and depends on the presence of HAX1. In terms of processing, N-glycosylated. In terms of tissue distribution, detected on Purkinje cells in the cerebellum molecular layer (at protein level).

The protein localises to the cell membrane. Its subcellular location is the presynaptic cell membrane. It localises to the perikaryon. It is found in the cell projection. The protein resides in the axon. The protein localises to the dendrite. Its subcellular location is the dendritic spine membrane. It localises to the cytoplasm. It is found in the cell cortex. The protein resides in the cytoskeleton. The enzyme catalyses K(+)(in) = K(+)(out). In terms of biological role, voltage-gated potassium channel that plays an important role in the rapid repolarization of fast-firing brain neurons. The channel opens in response to the voltage difference across the membrane, forming a potassium-selective channel through which potassium ions pass in accordance with their electrochemical gradient. The channel displays rapid activation and inactivation kinetics. It plays a role in the regulation of the frequency, shape and duration of action potentials in Purkinje cells. Required for normal survival of cerebellar neurons, probably via its role in regulating the duration and frequency of action potentials that in turn regulate the activity of voltage-gated Ca(2+) channels and cellular Ca(2+) homeostasis. Required for normal motor function. Plays a role in the reorganization of the cortical actin cytoskeleton and the formation of actin veil structures in neuronal growth cones via its interaction with HAX1 and the Arp2/3 complex. The sequence is that of Voltage-gated potassium channel KCNC3 from Rattus norvegicus (Rat).